Here is a 461-residue protein sequence, read N- to C-terminus: General transcription factor IIH subunit 2 (461 aa).

The segment covering 1–13 has biased composition (polar residues); the sequence is MSKNIYNNNAQNK. Disordered stretches follow at residues 1–37 and 61–83; these read MSKNIYNNNAQNKRTNRSLYDDEDGPAHVLQTNDEDG and LRPSNQEERNTRNRRLKNKDRDG. Residues 61–71 show a composition bias toward basic and acidic residues; sequence LRPSNQEERNT. The region spanning 98–275 is the VWFA domain; the sequence is HLCLILDLSK…ESLMLKCQPP (178 aa). The C4-type zinc-finger motif lies at 315–332; that stretch reads CPRCGVKSCELPTDCQIC. Residues 423–447 show a composition bias toward low complexity; the sequence is TNGKTNGNEITNGNGNGNGNENENG. The segment at 423 to 461 is disordered; the sequence is TNGKTNGNEITNGNGNGNGNENENGNGNGNGNGNGNGLH. Residues 434–459 are 13 X 2 tandem repeat of N-[GE]; it reads NGNGNGNGNENENGNGNGNGNGNGNG. Residues 448–461 show a composition bias toward gly residues; sequence NGNGNGNGNGNGLH.

This sequence belongs to the GTF2H2 family. As to quaternary structure, component of the 7-subunit TFIIH core complex composed of XPB/repB, XPD/repD, gtf2h1, gtf2h2, gtf2h3, gtf2h4 and gtf2h5, which is active in NER. The core complex associates with the 3-subunit CDK-activating kinase (CAK) module composed of cycH/cyclin H, cdk7 and mnat1 to form the 10-subunit holoenzyme (holo-TFIIH) active in transcription.

Its subcellular location is the nucleus. In terms of biological role, component of the general transcription and DNA repair factor IIH (TFIIH) core complex, which is involved in general and transcription-coupled nucleotide excision repair (NER) of damaged DNA and, when complexed to CAK, in RNA transcription by RNA polymerase II. In NER, TFIIH acts by opening DNA around the lesion to allow the excision of the damaged oligonucleotide and its replacement by a new DNA fragment. In transcription, TFIIH has an essential role in transcription initiation. When the pre-initiation complex (PIC) has been established, TFIIH is required for promoter opening and promoter escape. Phosphorylation of the C-terminal tail (CTD) of the largest subunit of RNA polymerase II by the kinase module CAK controls the initiation of transcription. The sequence is that of General transcription factor IIH subunit 2 (gtf2h2) from Dictyostelium discoideum (Social amoeba).